A 1191-amino-acid polypeptide reads, in one-letter code: Homeodomain-interacting protein kinase 3 (1191 aa).

K27 participates in a covalent cross-link: Glycyl lysine isopeptide (Lys-Gly) (interchain with G-Cter in SUMO2). The 329-residue stretch at 197 to 525 (YEVLDFLGRG…PIETLNHPFV (329 aa)) folds into the Protein kinase domain. Residues 203 to 211 (LGRGTFGQV) and K226 contribute to the ATP site. Catalysis depends on D322, which acts as the Proton acceptor. Y359 is modified (phosphotyrosine). The interval 766-920 (QNRSNSLQNT…NSMSDDEQES (155 aa)) is interaction with AR. Residues 774–867 (NTNVPHSAFI…SPRPSLRECK (94 aa)) are interaction with FAS. A disordered region spans residues 801–828 (TQDNHTSEGEARTCHEASVRQDSSVSDK). Positions 802-828 (QDNHTSEGEARTCHEASVRQDSSVSDK) are enriched in basic and acidic residues. The tract at residues 846 to 856 (ITISSDTDDEE) is interaction with UBL1. Over residues 888 to 905 (SSPDSTLSTSSSGQSSPS) the composition is skewed to low complexity. 2 disordered regions span residues 888–960 (SSPD…TCAG) and 993–1022 (TCQP…KPTS). Over residues 1008–1022 (NQPSASAARQQKPTS) the composition is skewed to polar residues.

It belongs to the protein kinase superfamily. CMGC Ser/Thr protein kinase family. HIPK subfamily. As to quaternary structure, interacts with Nkx1-2. Interacts with FAS and DAXX. Probably part of a complex consisting of HIPK3, FAS and FADD. Interacts with UBL1/SUMO-1. Interacts with and stabilizes ligand-bound androgen receptor (AR). In terms of processing, autophosphorylated. Autophosphorylation is not required for catalytic activity. May be sumoylated.

The protein localises to the nucleus. The enzyme catalyses L-seryl-[protein] + ATP = O-phospho-L-seryl-[protein] + ADP + H(+). It carries out the reaction L-threonyl-[protein] + ATP = O-phospho-L-threonyl-[protein] + ADP + H(+). Its function is as follows. Seems to negatively regulate apoptosis by promoting FADD phosphorylation. Enhances androgen receptor-mediated transcription. May act as a transcriptional corepressor for NK homeodomain transcription factors. The protein is Homeodomain-interacting protein kinase 3 (Hipk3) of Rattus norvegicus (Rat).